The chain runs to 189 residues: Batroxicidin (189 aa).

Positions 1–22 (MQGFFWKTWLVVALCGTSSSLA) are cleaved as a signal peptide. The propeptide occupies 23–155 (HRPLSYGEAL…DEEKDRPKRV (133 aa)). 2 disulfide bridges follow: Cys-79–Cys-90 and Cys-101–Cys-118. Residues 125-148 (EEEEEDEEEQKAEVEKDEEKEDEE) show a composition bias toward acidic residues. The tract at residues 125 to 152 (EEEEEDEEEQKAEVEKDEEKEDEEKDRP) is disordered.

This sequence belongs to the cathelicidin family. In terms of tissue distribution, expressed by the venom gland.

Its subcellular location is the secreted. It is found in the target cell membrane. Functionally, potent antimicrobial peptide against Gram-negative (MIC=0.25 ug/ml against E.coli ATCC 25922, MIC=1 ug/ml against P.aeruginosa) and Gram-positive bacteria (MIC=32 ug/ml against E.faecalis, MIC=32 ug/ml against S.aureus). Adopts an amphipathic alpha helical conformation, that may allow to partition into the target membrane. Low hemolytic activities have been observed on mammalian cells. In addition, when tested in vitro on the parasite Trypanosoma cruzi (responsible of the Chagas disease), is able to reduce the number of the three forms (epimastigote, trypomastigote and amastigote) by inducing cell death through necrosis. The chain is Batroxicidin from Bothrops atrox (Barba amarilla).